The sequence spans 165 residues: Chorismate pyruvate-lyase (165 aa).

Substrate contacts are provided by Met35, Arg77, Leu115, and Glu156.

Belongs to the UbiC family. As to quaternary structure, monomer.

Its subcellular location is the cytoplasm. It catalyses the reaction chorismate = 4-hydroxybenzoate + pyruvate. It participates in cofactor biosynthesis; ubiquinone biosynthesis. Removes the pyruvyl group from chorismate, with concomitant aromatization of the ring, to provide 4-hydroxybenzoate (4HB) for the ubiquinone pathway. The chain is Chorismate pyruvate-lyase from Shigella sonnei (strain Ss046).